A 387-amino-acid chain; its full sequence is Exodeoxyribonuclease 7 large subunit (387 aa).

The protein belongs to the XseA family. Heterooligomer composed of large and small subunits.

Its subcellular location is the cytoplasm. The enzyme catalyses Exonucleolytic cleavage in either 5'- to 3'- or 3'- to 5'-direction to yield nucleoside 5'-phosphates.. Bidirectionally degrades single-stranded DNA into large acid-insoluble oligonucleotides, which are then degraded further into small acid-soluble oligonucleotides. The polypeptide is Exodeoxyribonuclease 7 large subunit (Campylobacter jejuni subsp. doylei (strain ATCC BAA-1458 / RM4099 / 269.97)).